A 340-amino-acid chain; its full sequence is Glycerol-3-phosphate dehydrogenase [NAD(P)+] (340 aa).

NADPH is bound by residues Ser-13, Tyr-14, and Lys-108. 3 residues coordinate sn-glycerol 3-phosphate: Lys-108, Gly-137, and Thr-139. Ala-141 is an NADPH binding site. Lys-193, Asp-246, Ser-256, Arg-257, and Asn-258 together coordinate sn-glycerol 3-phosphate. Lys-193 serves as the catalytic Proton acceptor. Arg-257 contributes to the NADPH binding site. Residues Ile-281 and Glu-283 each coordinate NADPH.

This sequence belongs to the NAD-dependent glycerol-3-phosphate dehydrogenase family.

It localises to the cytoplasm. The enzyme catalyses sn-glycerol 3-phosphate + NAD(+) = dihydroxyacetone phosphate + NADH + H(+). It carries out the reaction sn-glycerol 3-phosphate + NADP(+) = dihydroxyacetone phosphate + NADPH + H(+). It participates in membrane lipid metabolism; glycerophospholipid metabolism. Catalyzes the reduction of the glycolytic intermediate dihydroxyacetone phosphate (DHAP) to sn-glycerol 3-phosphate (G3P), the key precursor for phospholipid synthesis. This is Glycerol-3-phosphate dehydrogenase [NAD(P)+] from Bartonella quintana (strain Toulouse) (Rochalimaea quintana).